Consider the following 187-residue polypeptide: MASTADFKNGLVLKVDGKLQQIVEFQHVKPGKGPAFVRTKLKDVVTGKTVDKTWNAGVKVETATVDRRDMTYLYNDGSSYILMDDKTFEQFELPLDAFGDAGRFLLENMRVQVSFHDGEALFGELPVSVDLRVEHTDPGLQGDRSTGGTKPATLETGAEIQVPLFIETGNVLKVDTRDGSYLSRVNN.

It belongs to the elongation factor P family.

It localises to the cytoplasm. It participates in protein biosynthesis; polypeptide chain elongation. Involved in peptide bond synthesis. Stimulates efficient translation and peptide-bond synthesis on native or reconstituted 70S ribosomes in vitro. Probably functions indirectly by altering the affinity of the ribosome for aminoacyl-tRNA, thus increasing their reactivity as acceptors for peptidyl transferase. This chain is Elongation factor P, found in Corynebacterium efficiens (strain DSM 44549 / YS-314 / AJ 12310 / JCM 11189 / NBRC 100395).